The sequence spans 125 residues: Protein JAZ13 (125 aa).

The EAR motif lies at 6-10 (LDLHL). Residues 99–125 (KKRSKSFTLTPNYTSSTSSSSSSLHNF) form a disordered region. Residues 112–125 (TSSTSSSSSSLHNF) are compositionally biased toward low complexity.

In terms of assembly, monomer. Lack of homodimerization, and very weak or no interaction with AFPH2/NINJA and other JAZ proteins. Interacts (via EAR motif) with TPL. Interacts (via jas motif) with MYC2. Phosphorylated at multiple serine residues.

Its function is as follows. Non-TIFY functional repressor of jasmonate (JA)-mediated growth and defense responses. Intrinsically resistant to JA-induced turnover, probably due to the absence of the canonical degron that strongly interacts with COI1 in the presence of JA-Ile in the TIFY/JAZ proteins. The polypeptide is Protein JAZ13 (Arabidopsis thaliana (Mouse-ear cress)).